Here is a 42-residue protein sequence, read N- to C-terminus: uncharacterized protein (42 aa).

It localises to the plastid. The protein resides in the chloroplast. This is an uncharacterized protein from Diacronema lutheri (Unicellular marine alga).